Here is a 127-residue protein sequence, read N- to C-terminus: Large ribosomal subunit protein eL8 (127 aa).

The protein belongs to the eukaryotic ribosomal protein eL8 family. Part of the 50S ribosomal subunit. Probably part of the RNase P complex.

It localises to the cytoplasm. Functionally, multifunctional RNA-binding protein that recognizes the K-turn motif in ribosomal RNA, the RNA component of RNase P, box H/ACA, box C/D and box C'/D' sRNAs. The sequence is that of Large ribosomal subunit protein eL8 from Picrophilus torridus (strain ATCC 700027 / DSM 9790 / JCM 10055 / NBRC 100828 / KAW 2/3).